The chain runs to 375 residues: Alcohol dehydrogenase 1 (375 aa).

S2 is subject to N-acetylserine. Zn(2+) contacts are provided by C47, H68, C98, C101, C104, C112, and C175. Residues 200-205 (GLGGVG), D224, and K229 each bind NAD(+). Residue K234 is modified to N6-succinyllysine. 293-295 (VGV) contributes to the NAD(+) binding site. An N6-succinyllysine modification is found at K340. R370 contacts NAD(+).

This sequence belongs to the zinc-containing alcohol dehydrogenase family. As to quaternary structure, homodimer. Zn(2+) is required as a cofactor.

Its subcellular location is the cytoplasm. It catalyses the reaction a primary alcohol + NAD(+) = an aldehyde + NADH + H(+). The enzyme catalyses a secondary alcohol + NAD(+) = a ketone + NADH + H(+). This chain is Alcohol dehydrogenase 1 (ADH1), found in Oryctolagus cuniculus (Rabbit).